Consider the following 151-residue polypeptide: uncharacterized protein (151 aa).

This is an uncharacterized protein from Acanthamoeba polyphaga mimivirus (APMV).